The following is a 1071-amino-acid chain: ATP-dependent helicase/deoxyribonuclease subunit B (1071 aa).

It belongs to the helicase family. AddB/RexB type 2 subfamily. In terms of assembly, heterodimer of AddA and RexB. It depends on Mg(2+) as a cofactor.

In terms of biological role, the heterodimer acts as both an ATP-dependent DNA helicase and an ATP-dependent, dual-direction single-stranded exonuclease. Recognizes the chi site generating a DNA molecule suitable for the initiation of homologous recombination. This subunit has 5' -&gt; 3' nuclease activity but not helicase activity. This is ATP-dependent helicase/deoxyribonuclease subunit B from Streptococcus pyogenes serotype M12 (strain MGAS9429).